Here is a 103-residue protein sequence, read N- to C-terminus: CLAVATA3/ESR (CLE)-related protein 22 (103 aa).

The signal sequence occupies residues 1–34; that stretch reads MGNYYSRRKSRKHITTVALIILLLLLFLFLYAKA. The tract at residues 37-103 is disordered; that stretch reads SSPNIHHHST…FTGPNPLHNR (67 aa). The segment covering 41-50 has biased composition (basic residues); sequence IHHHSTHGSL. A compositionally biased stretch (polar residues) spans 66-76; the sequence is NAASSRGSKYT. The residue at position 97 (proline 97) is a Hydroxyproline. O-linked (Ara...) hydroxyproline glycosylation occurs at proline 97.

It belongs to the CLV3/ESR signal peptide family. Post-translationally, the O-glycosylation (arabinosylation) of the hydroxyproline Pro-97 enhances binding affinity of the CLE22p peptide for its receptor. In terms of tissue distribution, mostly expressed in stems and apex, and, to a lower extent, in seedlings, leaves, flowers and siliques.

The protein localises to the secreted. The protein resides in the extracellular space. Its function is as follows. Extracellular signal peptide that regulates cell fate. Represses root apical meristem maintenance. This Arabidopsis thaliana (Mouse-ear cress) protein is CLAVATA3/ESR (CLE)-related protein 22.